The primary structure comprises 136 residues: Nucleoside diphosphate kinase (136 aa).

Residues Lys10, Phe58, Arg86, Thr92, Arg104, and Asn114 each coordinate ATP. His117 serves as the catalytic Pros-phosphohistidine intermediate.

This sequence belongs to the NDK family. As to quaternary structure, homotetramer. The cofactor is Mg(2+).

It localises to the cytoplasm. It catalyses the reaction a 2'-deoxyribonucleoside 5'-diphosphate + ATP = a 2'-deoxyribonucleoside 5'-triphosphate + ADP. The enzyme catalyses a ribonucleoside 5'-diphosphate + ATP = a ribonucleoside 5'-triphosphate + ADP. In terms of biological role, major role in the synthesis of nucleoside triphosphates other than ATP. The ATP gamma phosphate is transferred to the NDP beta phosphate via a ping-pong mechanism, using a phosphorylated active-site intermediate. The polypeptide is Nucleoside diphosphate kinase (Corynebacterium diphtheriae (strain ATCC 700971 / NCTC 13129 / Biotype gravis)).